The sequence spans 113 residues: UPF0122 protein Sez_1013 (113 aa).

The protein belongs to the UPF0122 family.

Might take part in the signal recognition particle (SRP) pathway. This is inferred from the conservation of its genetic proximity to ftsY/ffh. May be a regulatory protein. In Streptococcus equi subsp. zooepidemicus (strain MGCS10565), this protein is UPF0122 protein Sez_1013.